We begin with the raw amino-acid sequence, 471 residues long: MSIQTSDPNETSDLKSLSLIAAHSHITGLGLDENLQPRPTSEGMVGQLQARRAAGVILKMVQNGTIAGRAVLVAGPPSTGKTALAMGVSQSLGKDVPFTAIAGSEIFSLELSKTEALTQAFRKSIGIKIKEETELIEGEVVEIQIDRSITGGHKQGKLTIKTTDMETIYELGNKMIDGLTKEKVLAGDVISIDKASGKITKLGRSFARSRDYDAMGADTRFVQCPEGELQKRKTVVHTVSLHEIDVINSRTQGFLALFTGDTGEIRSEVRDQINTKVAEWKEEGKAEIVPGVLFIDEVHMLDIECFSFINRALEDEFAPIVMMATNRGVSKTRGTNYKSPHGLPLDLLDRSIIITTKSYNEQEIKTILSIRAQEEEVELSSDALDLLTKTGVETSLRYSSNLISVAQQIAMKRKNNTVEVEDVKRAYLLFLDSARSVKYVQENESQYIDDQGNVQISIAKSADPDAMDTTE.

75-82 (GPPSTGKT) lines the ATP pocket.

The protein belongs to the RuvB family. In terms of assembly, probably forms a homohexamer. Interacts with RVB1 and may form heterododecamers with RVB1. Component of the SWR1 chromatin remodeling complex composed of at least ACT1, ARP4, RVB1, RVB2, ARP6, YAF9, VPS71, VPS72, SWC3, SWC4, SWC5, SWC7 and SWR1, and perhaps BDF1. Component of the chromatin-remodeling INO80 complex, at least composed of ARP4, ARP5, ARP8, RVB1, RVB2, TAF14, NHP10, IES1, IES3, IES4, IES6, ACT1, IES2, IES5 and INO80. Also belongs to the R2TP complex composed of at least RVB1, RVB2, TAH1 and PIH1. Interacts with SPT15/TBP.

The protein resides in the nucleus. It is found in the nucleoplasm. It carries out the reaction ATP + H2O = ADP + phosphate + H(+). DNA helicase which participates in several chromatin remodeling complexes, including the SWR1 and the INO80 complexes. The SWR1 complex mediates the ATP-dependent exchange of histone H2A for the H2A variant HZT1 leading to transcriptional regulation of selected genes by chromatin remodeling. The INO80 complex remodels chromatin by shifting nucleosomes. Its ability to induce transcription of some phosphate-responsive genes is modulated by inositol polyphosphates. The INO80 complex is involved in DNA repair by associating to 'Ser-129' phosphorylated H2A histones as a response to DNA damage. During transcription may recruit SPT15/TBP to the TATA-boxes of involved genes. Required for box C/D and box H/ACA snoRNA accumulation and involved in pre-rRNA processing. The chain is RuvB-like protein 2 (RVB2) from Saccharomyces cerevisiae (strain ATCC 204508 / S288c) (Baker's yeast).